The sequence spans 232 residues: Thrombin-like enzyme BjussuSP-1 (232 aa).

In terms of domain architecture, Peptidase S1 spans 1 to 223 (VLGGDECDIN…YTDWIQRNIA (223 aa)). Disulfide bonds link cysteine 7/cysteine 138, cysteine 25/cysteine 41, cysteine 73/cysteine 230, cysteine 117/cysteine 184, cysteine 149/cysteine 163, and cysteine 174/cysteine 199. Histidine 40 (charge relay system) is an active-site residue. N-linked (GlcNAc...) asparagine glycosylation occurs at asparagine 77. Aspartate 85 serves as the catalytic Charge relay system. Asparagine 129 is a glycosylation site (N-linked (GlcNAc...) asparagine). Serine 178 (charge relay system) is an active-site residue.

The protein belongs to the peptidase S1 family. Snake venom subfamily. As to quaternary structure, monomer. Post-translationally, N-glycosylated. Contains sialic acid residues. Deglycosylation reduces in 50% the formation of fibrin clot. In terms of tissue distribution, expressed by the venom gland.

The protein localises to the secreted. With respect to regulation, inhibited by leupeptin, heparin, and 1.10-phenantroline. Thrombin-like enzyme that shows clotting activity upon human plasma. Shows specific fibrinogenolytic activity for Aalpha chain (FGA). Hydrolyzes fibrin, BAPNA and TAME, as well as chromogenic artificial substrates of the blood coagulation cascasde: S-27654 for factor X (F10), S-2302 for kallikrein (KLK), factor XIa (F11), and XIIa (F12), and S-2266 for kallikrein and factor XIa (F11). Subcutaneous injection into mice induces a mild edema. Intravenous and intramuscular injection reduce plasma fibrinogen concentration and increase the levels of fibrin(ogen) degradation products. Intramuscular injection also promotes an increase in the expression of proMMP-9, but is unable to activate it. This chain is Thrombin-like enzyme BjussuSP-1, found in Bothrops jararacussu (Jararacussu).